A 210-amino-acid polypeptide reads, in one-letter code: Thymidylate kinase (210 aa).

An ATP-binding site is contributed by 10 to 17 (GPEGAGKS).

Belongs to the thymidylate kinase family.

It carries out the reaction dTMP + ATP = dTDP + ADP. Phosphorylation of dTMP to form dTDP in both de novo and salvage pathways of dTTP synthesis. In Pseudomonas aeruginosa (strain UCBPP-PA14), this protein is Thymidylate kinase.